A 908-amino-acid polypeptide reads, in one-letter code: Protein translocase subunit SecA (908 aa).

ATP is bound by residues Q87, G105–T109, and D512. Positions Q876–S908 are disordered. Positions 892, 894, 903, and 904 each coordinate Zn(2+). A compositionally biased stretch (basic residues) spans R898–S908.

It belongs to the SecA family. As to quaternary structure, monomer and homodimer. Part of the essential Sec protein translocation apparatus which comprises SecA, SecYEG and auxiliary proteins SecDF-YajC and YidC. It depends on Zn(2+) as a cofactor.

It is found in the cell inner membrane. The protein localises to the cytoplasm. It carries out the reaction ATP + H2O + cellular proteinSide 1 = ADP + phosphate + cellular proteinSide 2.. Its function is as follows. Part of the Sec protein translocase complex. Interacts with the SecYEG preprotein conducting channel. Has a central role in coupling the hydrolysis of ATP to the transfer of proteins into and across the cell membrane, serving both as a receptor for the preprotein-SecB complex and as an ATP-driven molecular motor driving the stepwise translocation of polypeptide chains across the membrane. The sequence is that of Protein translocase subunit SecA from Shewanella baltica (strain OS185).